We begin with the raw amino-acid sequence, 349 residues long: DNA polymerase IV (349 aa).

A UmuC domain is found at 4–185; it reads IIHIDCDCFY…LPVAKLHGVG (182 aa). Residues D8 and D103 each contribute to the Mg(2+) site. E104 is an active-site residue.

The protein belongs to the DNA polymerase type-Y family. Monomer. Mg(2+) serves as cofactor.

Its subcellular location is the cytoplasm. It carries out the reaction DNA(n) + a 2'-deoxyribonucleoside 5'-triphosphate = DNA(n+1) + diphosphate. Functionally, poorly processive, error-prone DNA polymerase involved in untargeted mutagenesis. Copies undamaged DNA at stalled replication forks, which arise in vivo from mismatched or misaligned primer ends. These misaligned primers can be extended by PolIV. Exhibits no 3'-5' exonuclease (proofreading) activity. May be involved in translesional synthesis, in conjunction with the beta clamp from PolIII. This Pseudomonas paraeruginosa (strain DSM 24068 / PA7) (Pseudomonas aeruginosa (strain PA7)) protein is DNA polymerase IV.